Reading from the N-terminus, the 635-residue chain is tRNA uridine 5-carboxymethylaminomethyl modification enzyme MnmG (635 aa).

15-20 (GAGHAG) contributes to the FAD binding site. 276–290 (GPRYCPSIEDKIVRF) is a binding site for NAD(+).

This sequence belongs to the MnmG family. As to quaternary structure, homodimer. Heterotetramer of two MnmE and two MnmG subunits. It depends on FAD as a cofactor.

It is found in the cytoplasm. Its function is as follows. NAD-binding protein involved in the addition of a carboxymethylaminomethyl (cmnm) group at the wobble position (U34) of certain tRNAs, forming tRNA-cmnm(5)s(2)U34. The protein is tRNA uridine 5-carboxymethylaminomethyl modification enzyme MnmG of Streptococcus sanguinis (strain SK36).